Consider the following 671-residue polypeptide: DNA ligase (671 aa).

NAD(+) is bound by residues 32-36, 81-82, and E113; these read DAEYD and SL. Catalysis depends on K115, which acts as the N6-AMP-lysine intermediate. R136, E173, K290, and K314 together coordinate NAD(+). Residues C408, C411, C426, and C432 each contribute to the Zn(2+) site. Positions 593–671 constitute a BRCT domain; sequence EIDSPFAGKT…EAEMLRLLGS (79 aa).

It belongs to the NAD-dependent DNA ligase family. LigA subfamily. It depends on Mg(2+) as a cofactor. The cofactor is Mn(2+).

It carries out the reaction NAD(+) + (deoxyribonucleotide)n-3'-hydroxyl + 5'-phospho-(deoxyribonucleotide)m = (deoxyribonucleotide)n+m + AMP + beta-nicotinamide D-nucleotide.. DNA ligase that catalyzes the formation of phosphodiester linkages between 5'-phosphoryl and 3'-hydroxyl groups in double-stranded DNA using NAD as a coenzyme and as the energy source for the reaction. It is essential for DNA replication and repair of damaged DNA. The sequence is that of DNA ligase from Shigella boydii serotype 4 (strain Sb227).